Consider the following 659-residue polypeptide: Enzymatic polyprotein (659 aa).

Positions 1 to 180 (MSLRNRTNPN…FLEEGGNHVD (180 aa)) are protease. Residue D34 is part of the active site. One can recognise a Reverse transcriptase domain in the interval 252 to 436 (LELKVIKPSK…EKINFLGLEI (185 aa)).

The protein belongs to the caulimoviridae enzymatic polyprotein family.

It carries out the reaction DNA(n) + a 2'-deoxyribonucleoside 5'-triphosphate = DNA(n+1) + diphosphate. Encodes for at least two polypeptides: protease (PR) and reverse transcriptase (RT). The protease processes the polyprotein in cis. Reverse transcriptase is multifunctional enzyme that converts the viral RNA genome into dsDNA in viral cytoplasmic capsids. This enzyme displays a DNA polymerase activity that can copy either DNA or RNA templates, and a ribonuclease H (RNase H) activity that cleaves the RNA strand of RNA-DNA heteroduplexes in a partially processive 3'- to 5'-endonucleasic mode. Neo-synthesized pregenomic RNA (pgRNA) are encapsidated, and reverse-transcribed inside the nucleocapsid. Partial (+)DNA is synthesized from the (-)DNA template and generates the relaxed circular DNA (RC-DNA) genome. After budding and infection, the RC-DNA migrates in the nucleus, and is converted into a plasmid-like covalently closed circular DNA (cccDNA). This is Enzymatic polyprotein from Dianthus caryophyllus (Carnation).